The chain runs to 387 residues: Arrestin-C (387 aa).

It belongs to the arrestin family. Retina and pineal gland.

May play a role in an as yet undefined retina-specific signal transduction. Could bind to photoactivated-phosphorylated red/green opsins. The sequence is that of Arrestin-C (arr3) from Xenopus laevis (African clawed frog).